A 317-amino-acid polypeptide reads, in one-letter code: Acetyl-coenzyme A carboxylase carboxyl transferase subunit alpha (317 aa).

The CoA carboxyltransferase C-terminal domain maps to 39-293 (KLEDKNRKLT…KDALGASLER (255 aa)).

The protein belongs to the AccA family. In terms of assembly, acetyl-CoA carboxylase is a heterohexamer composed of biotin carboxyl carrier protein (AccB), biotin carboxylase (AccC) and two subunits each of ACCase subunit alpha (AccA) and ACCase subunit beta (AccD).

The protein resides in the cytoplasm. The catalysed reaction is N(6)-carboxybiotinyl-L-lysyl-[protein] + acetyl-CoA = N(6)-biotinyl-L-lysyl-[protein] + malonyl-CoA. It participates in lipid metabolism; malonyl-CoA biosynthesis; malonyl-CoA from acetyl-CoA: step 1/1. In terms of biological role, component of the acetyl coenzyme A carboxylase (ACC) complex. First, biotin carboxylase catalyzes the carboxylation of biotin on its carrier protein (BCCP) and then the CO(2) group is transferred by the carboxyltransferase to acetyl-CoA to form malonyl-CoA. The protein is Acetyl-coenzyme A carboxylase carboxyl transferase subunit alpha of Chromohalobacter salexigens (strain ATCC BAA-138 / DSM 3043 / CIP 106854 / NCIMB 13768 / 1H11).